We begin with the raw amino-acid sequence, 256 residues long: MKPAIVILCLFVASLYAADSDVPNDILEEQLYNSVVVADYDSAVEKSKHLYEEKKSEVITNVVNKLIRNNKMNCMEYAYQLWLQGSKDIVRDCFPVEFRLIFAENAIKLMYKRDGLALTLSNDVQGDDGRPAYGDGKDKTSPRVSWKLIALWENNKVYFKILNTERNQYLVLGVGTNWNGDHMAFGVNSVDSFRAQWYLQPAKYDNDVLFYIYNREYSKALTLSRTVEPSGHRMAWGYNGRVIGSPEHYAWGIKAF.

Residues Met1–Ala17 form the signal peptide.

This sequence belongs to the 30 kDa lipoprotein family. As to expression, detected in larval hemolymph (at protein level).

Its subcellular location is the secreted. This Bombyx mori (Silk moth) protein is Low molecular mass lipoprotein 3.